A 183-amino-acid chain; its full sequence is Ribosome rescue factor SmrB (183 aa).

One can recognise a Smr domain in the interval 98-173 (LDLHGLTQMQ…GDAALLVLIE (76 aa)).

Belongs to the SmrB family. As to quaternary structure, associates with collided ribosomes, but not with correctly translating polysomes.

In terms of biological role, acts as a ribosome collision sensor. Detects stalled/collided disomes (pairs of ribosomes where the leading ribosome is stalled and a second ribosome has collided with it) and endonucleolytically cleaves mRNA at the 5' boundary of the stalled ribosome. Stalled/collided disomes form a new interface (primarily via the 30S subunits) that binds SmrB. Cleaved mRNA becomes available for tmRNA ligation, leading to ribosomal subunit dissociation and rescue of stalled ribosomes. The sequence is that of Ribosome rescue factor SmrB from Enterobacter sp. (strain 638).